The primary structure comprises 453 residues: Serine/threonine-protein phosphatase 2A 55 kDa regulatory subunit B delta isoform (453 aa).

WD repeat units lie at residues 32-71 (AEAD…KGRA), 97-138 (EIEE…KRAE), 181-219 (AHTY…RSFN), and 230-270 (ELTE…LCDR). A Phosphoserine modification is found at serine 285. WD repeat units lie at residues 289-327 (EIIS…RPVE), 344-385 (ENDC…DVTL), and 420-452 (DFNK…QDKI). Tyrosine 305 is modified (phosphotyrosine). Threonine 308 carries the post-translational modification Phosphothreonine. Residues 385–406 (LEASRENSKPRASLKPRKVCSG) are disordered.

This sequence belongs to the phosphatase 2A regulatory subunit B family. As to quaternary structure, PP2A consists of a common heterodimeric core enzyme, composed of a 36 kDa catalytic subunit (subunit C) and a 65 kDa constant regulatory subunit (PR65 or subunit A), that associates with a variety of regulatory subunits. Proteins that associate with the core dimer include three families of regulatory subunits B (the R2/B/PR55/B55, R3/B''/PR72/PR130/PR59 and R5/B'/B56 families), the 48 kDa variable regulatory subunit, viral proteins, and cell signaling molecules. Interacts with ENSA (when phosphorylated at 'Ser-67') and ARPP19 (when phosphorylated at 'Ser-62'), leading to inhibit PP2A activity. Interacts with IER5. In terms of tissue distribution, widely expressed with high levels in brain, heart, placenta, skeletal muscle, testis, thymus and spleen.

It localises to the cytoplasm. Functionally, substrate-recognition subunit of protein phosphatase 2A (PP2A) that plays a key role in cell cycle by controlling mitosis entry and exit. Involved in chromosome clustering during late mitosis by mediating dephosphorylation of MKI67. The activity of PP2A complexes containing PPP2R2D (PR55-delta) fluctuate during the cell cycle: the activity is high in interphase and low in mitosis. This Rattus norvegicus (Rat) protein is Serine/threonine-protein phosphatase 2A 55 kDa regulatory subunit B delta isoform (Ppp2r2d).